The chain runs to 730 residues: Arginine decarboxylase 1B, chloroplastic (730 aa).

The transit peptide at 1-37 (MPALGCCVDAAVSPPPGYSFLWDSSLPAPEIFPSGVP) directs the protein to the chloroplast. K157 bears the N6-(pyridoxal phosphate)lysine mark. Residues S309, G346, and 395 to 398 (ESGR) each bind pyridoxal 5'-phosphate. 460–461 (YA) is a binding site for substrate. C548 (proton donor; shared with dimeric partner) is an active-site residue. D549 is a substrate binding site. Position 590 (Y590) interacts with pyridoxal 5'-phosphate.

The protein belongs to the Orn/Lys/Arg decarboxylase class-II family. SpeA subfamily. Requires Mg(2+) as cofactor. It depends on pyridoxal 5'-phosphate as a cofactor.

The protein resides in the plastid. The protein localises to the chloroplast. The enzyme catalyses L-arginine + H(+) = agmatine + CO2. The protein operates within alkaloid biosynthesis; nicotine biosynthesis. It participates in amine and polyamine biosynthesis; agmatine biosynthesis; agmatine from L-arginine: step 1/1. Functionally, involved in the biosynthesis of pyridine alkaloid natural products, leading mainly to the production of anabasine, anatabine, nicotine and nornicotine, effective deterrents against herbivores with antiparasitic and pesticide properties (neurotoxins); nornicotine serves as the precursor in the synthesis of the carcinogen compound N'-nitrosonornicotine (NNN). Required for the biosynthesis of putrescine. Catalyzes the first step of polyamine (PA) biosynthesis to produce putrescine from arginine. The sequence is that of Arginine decarboxylase 1B, chloroplastic from Nicotiana tabacum (Common tobacco).